A 240-amino-acid polypeptide reads, in one-letter code: Gene 88 protein (240 aa).

This chain is Gene 88 protein (88), found in Mycobacterium phage D29 (Mycobacteriophage D29).